We begin with the raw amino-acid sequence, 88 residues long: Small ribosomal subunit protein bS20 (88 aa).

Belongs to the bacterial ribosomal protein bS20 family.

Binds directly to 16S ribosomal RNA. This Clostridium kluyveri (strain NBRC 12016) protein is Small ribosomal subunit protein bS20.